The following is a 711-amino-acid chain: Hydroperoxide isomerase ALOXE3 (711 aa).

Residues 2 to 119 (AVYRLCVTTG…TVELRPGTAR (118 aa)) form the PLAT domain. Residues 120-711 (TICQDSLPLL…PPLIENSVSI (592 aa)) enclose the Lipoxygenase domain. Fe cation contacts are provided by His408, His413, His588, Asn592, and Ile711.

This sequence belongs to the lipoxygenase family. Fe cation serves as cofactor. As to expression, predominantly expressed in skin.

It localises to the cytoplasm. It catalyses the reaction a hydroperoxyeicosatetraenoate = a hydroxy-epoxy-eicosatetraenoate. The enzyme catalyses (12R)-hydroperoxy-(5Z,8Z,10E,14Z)-eicosatetraenoate = (8R)-hydroxy-(11R,12R)-epoxy-(5Z,9E,14Z)-eicosatrienoate. The catalysed reaction is (12S)-hydroperoxy-(5Z,8Z,10E,14Z)-eicosatetraenoate = (8R)-hydroxy-(11S,12S)-epoxy-(5Z,9E,14Z)-eicosatrienoate. It carries out the reaction (12S)-hydroperoxy-(5Z,8Z,10E,14Z)-eicosatetraenoate = (10R)-hydroxy-(11S,12S)-epoxy-(5Z,8Z,14Z)-eicosatrienoate. It catalyses the reaction (15S)-hydroperoxy-(5Z,8Z,11Z,13E)-eicosatetraenoate = (13R)-hydroxy-(14S,15S)-epoxy-(5Z,8Z,11Z)-eicosatrienoate. The enzyme catalyses (5S)-hydroperoxy-(6E,8Z,11Z,14Z)-eicosatetraenoate = 7R-hydroxy-5S,6S-epoxy-(8Z,11Z,14Z)-eicosatrienoate. The catalysed reaction is (13S)-hydroperoxy-(9Z,11E)-octadecadienoate = 11-hydroxy-(12S,13S)-epoxy-(9Z)-octadecenoate. It carries out the reaction N-[omega-(9R)-hydroperoxy-(10E,12Z)-octadecadienoyloxy]acyl-beta-D-glucosyl-(1&lt;-&gt;1)-octadecasphing-4E-enine = a N-[omega-(9R,10R)-epoxy-(13R)-hydroxy-(11E)-octadecenoyloxy]acyl-beta-D-glucosyl-(1&lt;-&gt;1)-sphing-4E-enine. It catalyses the reaction a N-[omega-(9R)-hydroperoxy-(10E,12Z)-octadecadienoyloxy]-acylsphin-4E-enine = a N-[omega-(9R,10R)-epoxy-(13R)-hydroxy-(11E)-octadecenoyloxy]-acylsphing-4E-enine. The enzyme catalyses a hydroperoxyeicosatetraenoate = an oxoeicosatetraenoate + H2O. The catalysed reaction is (12R)-hydroperoxy-(5Z,8Z,10E,14Z)-eicosatetraenoate = 12-oxo-(5Z,8Z,10E,14Z)-eicosatetraenoate + H2O. It carries out the reaction (12S)-hydroperoxy-(5Z,8Z,10E,14Z)-eicosatetraenoate = 12-oxo-(5Z,8Z,10E,14Z)-eicosatetraenoate + H2O. It catalyses the reaction (15S)-hydroperoxy-(5Z,8Z,11Z,13E)-eicosatetraenoate = 15-oxo-(5Z,8Z,11Z,13E)-eicosatetraenoate + H2O. The enzyme catalyses (13S)-hydroperoxy-(9Z,11E)-octadecadienoate = 13-oxo-(9Z,11E)-octadecadienoate + H2O. The catalysed reaction is (8S)-hydroperoxy-(5Z,9E,11Z,14Z)-eicosatetraenoate = (10R)-hydroxy-(8S,9S)-epoxy-(5Z,11Z,14Z)-eicosatrienoate. It carries out the reaction (8R)-hydroperoxy-(5Z,9E,11Z,14Z)-eicosatetraenoate = 8-oxo-(5Z,9E,11Z,14Z)-eicosatetraenoate + H2O. It catalyses the reaction (8S)-hydroperoxy-(5Z,9E,11Z,14Z)-eicosatetraenoate = 8-oxo-(5Z,9E,11Z,14Z)-eicosatetraenoate + H2O. It functions in the pathway lipid metabolism; hydroperoxy eicosatetraenoic acid biosynthesis. Its pathway is lipid metabolism; sphingolipid metabolism. With respect to regulation, lipoxygenase activity is activated by 13(S)-HPODE leading to an active free ferric enzyme. The lipoxygenase and hydroperoxide isomerase activities are in competition and are reciprocally regulated by oxygen. The oxygen reacts with an epoxyallylic radical intermediate leading to an epoxyallylic peroxyl radical, which, due to its limited reactivity within the enzyme active site, it dissociates and leaves the enzyme in the activated free ferric state. Functionally, non-heme iron-containing lipoxygenase which is atypical in that it displays a prominent hydroperoxide isomerase activity and a reduced lipoxygenases activity. The hydroperoxide isomerase activity catalyzes the isomerization of hydroperoxides, derived from arachidonic and linoleic acid by ALOX12B, into hepoxilin-type epoxyalcohols and ketones. In presence of oxygen, oxygenates polyunsaturated fatty acids, including arachidonic acid, to produce fatty acid hydroperoxides. In the skin, acts downstream of ALOX12B on the linoleate moiety of esterified omega-hydroxyacyl-sphingosine (EOS) ceramides to produce an epoxy-ketone derivative, a crucial step in the conjugation of omega-hydroxyceramide to membrane proteins. Therefore plays a crucial role in the synthesis of corneocytes lipid envelope and the establishment of the skin barrier to water loss. In parallel, it may have a signaling function in barrier formation through the production of hepoxilins metabolites. Also plays a role in adipocyte differentiation through hepoxilin A3 and hepoxilin B3 production which in turn activate PPARG. Through the production of hepoxilins in the spinal cord, it may regulate inflammatory tactile allodynia. This is Hydroperoxide isomerase ALOXE3 from Homo sapiens (Human).